The following is a 614-amino-acid chain: UvrABC system protein C (614 aa).

In terms of domain architecture, GIY-YIG spans 25–103 (SVPGVYKMFG…IKSLKPKYNI (79 aa)). A UVR domain is found at 214 to 249 (KEIQCELFEMMCRFSNNQDYESAIVCRDRLHALKSM).

The protein belongs to the UvrC family. Interacts with UvrB in an incision complex.

The protein localises to the cytoplasm. In terms of biological role, the UvrABC repair system catalyzes the recognition and processing of DNA lesions. UvrC both incises the 5' and 3' sides of the lesion. The N-terminal half is responsible for the 3' incision and the C-terminal half is responsible for the 5' incision. This is UvrABC system protein C from Anaplasma phagocytophilum (strain HZ).